The sequence spans 836 residues: Ethylene receptor 3 (836 aa).

The next 3 membrane-spanning stretches (helical) occupy residues 137–157, 166–186, and 204–224; these read LIAA…AGLR, LVQF…TAFT, and LTAL…PQLL. Cu cation contacts are provided by cysteine 176 and histidine 180. Residues 269–413 form the GAF domain; it reads DRHTVLYTTL…VVAGQVAVAL (145 aa). A coiled-coil region spans residues 416 to 452; sequence ATLLEESRAMRDRLAEQNRELLQARRDALMANEARQA. The region spanning 457-691 is the Histidine kinase domain; sequence MSQGMRRPIH…LVLRFQLQSP (235 aa). The region spanning 718-834 is the Response regulatory domain; that stretch reads LLIDDDDDIN…LKDELARILQ (117 aa).

Belongs to the ethylene receptor family. It depends on Cu cation as a cofactor.

Its subcellular location is the endoplasmic reticulum membrane. The enzyme catalyses ATP + protein L-histidine = ADP + protein N-phospho-L-histidine.. In terms of biological role, ethylene receptor related to bacterial two-component regulators. Acts as a negative regulator of ethylene signaling. May delay the transition from the vegetative stage to the floral stage by up-regulating GI (GIGANTEA) and RCN1 and cause starch accumulation in stems by down-regulating the alpha-amylase AMY3D. This is Ethylene receptor 3 (ETR3) from Oryza sativa subsp. japonica (Rice).